Reading from the N-terminus, the 207-residue chain is Outer-membrane lipoprotein LolB (207 aa).

The signal sequence occupies residues Met-1–Ala-21. Residue Cys-22 is the site of N-palmitoyl cysteine attachment. A lipid anchor (S-diacylglycerol cysteine) is attached at Cys-22.

This sequence belongs to the LolB family. In terms of assembly, monomer.

It localises to the cell outer membrane. Plays a critical role in the incorporation of lipoproteins in the outer membrane after they are released by the LolA protein. The sequence is that of Outer-membrane lipoprotein LolB from Escherichia coli (strain SMS-3-5 / SECEC).